The primary structure comprises 138 residues: Phosphoribosyl-AMP cyclohydrolase (138 aa).

D86 provides a ligand contact to Mg(2+). C87 lines the Zn(2+) pocket. 2 residues coordinate Mg(2+): D88 and D90. Residues C104 and C111 each coordinate Zn(2+).

Belongs to the PRA-CH family. In terms of assembly, homodimer. Requires Mg(2+) as cofactor. The cofactor is Zn(2+).

The protein localises to the cytoplasm. It catalyses the reaction 1-(5-phospho-beta-D-ribosyl)-5'-AMP + H2O = 1-(5-phospho-beta-D-ribosyl)-5-[(5-phospho-beta-D-ribosylamino)methylideneamino]imidazole-4-carboxamide. Its pathway is amino-acid biosynthesis; L-histidine biosynthesis; L-histidine from 5-phospho-alpha-D-ribose 1-diphosphate: step 3/9. Catalyzes the hydrolysis of the adenine ring of phosphoribosyl-AMP. The chain is Phosphoribosyl-AMP cyclohydrolase from Marinobacter nauticus (strain ATCC 700491 / DSM 11845 / VT8) (Marinobacter aquaeolei).